Here is a 47-residue protein sequence, read N- to C-terminus: Large ribosomal subunit protein bL36B (47 aa).

This sequence belongs to the bacterial ribosomal protein bL36 family.

This chain is Large ribosomal subunit protein bL36B, found in Pectobacterium atrosepticum (strain SCRI 1043 / ATCC BAA-672) (Erwinia carotovora subsp. atroseptica).